A 911-amino-acid polypeptide reads, in one-letter code: DNA ligase 4 (911 aa).

ATP is bound by residues Glu-271, Thr-272, Lys-273, Leu-274, Arg-278, Glu-331, Lys-345, Phe-367, Glu-427, Lys-432, Lys-449, and Lys-451. The active-site N6-AMP-lysine intermediate is the Lys-273. Glu-331 contacts Mg(2+). A Mg(2+)-binding site is contributed by Glu-427. Residues 610 to 620 (LATKHLHVGDD) form a required for catalytic activity region. 2 BRCT domains span residues 654–743 (KVSN…PRFM) and 808–911 (SPLS…QYLL).

This sequence belongs to the ATP-dependent DNA ligase family. Interacts with XRCC4; the LIG4-XRCC4 subcomplex has a 1:2 stoichiometry and XRCC4 is required for LIG4 stability. Component of the core long-range non-homologous end joining (NHEJ) complex (also named DNA-PK complex) composed of PRKDC, LIG4, XRCC4, XRCC6/Ku70, XRCC5/Ku86 and NHEJ1/XLF. Additional component of the NHEJ complex includes PAXX. Following autophosphorylation, PRKDC dissociates from DNA, leading to formation of the short-range NHEJ complex, composed of LIG4, XRCC4, XRCC6/Ku70, XRCC5/Ku86 and NHEJ1/XLF. Interacts with DCLRE1C; the interaction is direct. Interacts with APLF. It depends on Mg(2+) as a cofactor.

Its subcellular location is the nucleus. It carries out the reaction ATP + (deoxyribonucleotide)n-3'-hydroxyl + 5'-phospho-(deoxyribonucleotide)m = (deoxyribonucleotide)n+m + AMP + diphosphate.. Its function is as follows. DNA ligase involved in DNA non-homologous end joining (NHEJ); required for double-strand break (DSB) repair and V(D)J recombination. Catalyzes the NHEJ ligation step of the broken DNA during DSB repair by resealing the DNA breaks after the gap filling is completed. Joins single-strand breaks in a double-stranded polydeoxynucleotide in an ATP-dependent reaction. LIG4 is mechanistically flexible: it can ligate nicks as well as compatible DNA overhangs alone, while in the presence of XRCC4, it can ligate ends with 2-nucleotides (nt) microhomology and 1-nt gaps. Forms a subcomplex with XRCC4; the LIG4-XRCC4 subcomplex is responsible for the NHEJ ligation step and XRCC4 enhances the joining activity of LIG4. Binding of the LIG4-XRCC4 complex to DNA ends is dependent on the assembly of the DNA-dependent protein kinase complex DNA-PK to these DNA ends. LIG4 regulates nuclear localization of XRCC4. The chain is DNA ligase 4 from Mus musculus (Mouse).